Reading from the N-terminus, the 269-residue chain is Formamidopyrimidine-DNA glycosylase (269 aa).

The Schiff-base intermediate with DNA role is filled by Pro2. Glu3 (proton donor) is an active-site residue. Lys57 serves as the catalytic Proton donor; for beta-elimination activity. Positions 90, 109, and 150 each coordinate DNA. The FPG-type zinc-finger motif lies at 235 to 269 (QVYGRKGEPCRVCGTPIVATKHAQRATFYCRQCQK). Residue Arg259 is the Proton donor; for delta-elimination activity of the active site.

Belongs to the FPG family. Monomer. Zn(2+) is required as a cofactor.

The enzyme catalyses Hydrolysis of DNA containing ring-opened 7-methylguanine residues, releasing 2,6-diamino-4-hydroxy-5-(N-methyl)formamidopyrimidine.. It catalyses the reaction 2'-deoxyribonucleotide-(2'-deoxyribose 5'-phosphate)-2'-deoxyribonucleotide-DNA = a 3'-end 2'-deoxyribonucleotide-(2,3-dehydro-2,3-deoxyribose 5'-phosphate)-DNA + a 5'-end 5'-phospho-2'-deoxyribonucleoside-DNA + H(+). In terms of biological role, involved in base excision repair of DNA damaged by oxidation or by mutagenic agents. Acts as a DNA glycosylase that recognizes and removes damaged bases. Has a preference for oxidized purines, such as 7,8-dihydro-8-oxoguanine (8-oxoG). Has AP (apurinic/apyrimidinic) lyase activity and introduces nicks in the DNA strand. Cleaves the DNA backbone by beta-delta elimination to generate a single-strand break at the site of the removed base with both 3'- and 5'-phosphates. This chain is Formamidopyrimidine-DNA glycosylase, found in Escherichia coli O6:K15:H31 (strain 536 / UPEC).